Reading from the N-terminus, the 832-residue chain is Putative beta-glucosidase (832 aa).

Aspartate 225 is an active-site residue. The 160-residue stretch at threonine 397–valine 556 folds into the PA14 domain.

It belongs to the glycosyl hydrolase 3 family.

Its subcellular location is the cytoplasm. The catalysed reaction is Hydrolysis of terminal, non-reducing beta-D-glucosyl residues with release of beta-D-glucose.. The protein is Putative beta-glucosidase of Schizosaccharomyces pombe (strain 972 / ATCC 24843) (Fission yeast).